The following is a 309-amino-acid chain: Formamidopyrimidine-DNA glycosylase (309 aa).

Residue Pro2 is the Schiff-base intermediate with DNA of the active site. The Proton donor role is filled by Glu3. Residue Lys56 is the Proton donor; for beta-elimination activity of the active site. Residues His106 and Arg129 each contribute to the DNA site. An FPG-type zinc finger spans residues 271-305; that stretch reads NVYGRQGNACPHCESTLENIKLNGRASVYCPLCQP. The Proton donor; for delta-elimination activity role is filled by Arg295.

It belongs to the FPG family. In terms of assembly, monomer. Requires Zn(2+) as cofactor.

It carries out the reaction Hydrolysis of DNA containing ring-opened 7-methylguanine residues, releasing 2,6-diamino-4-hydroxy-5-(N-methyl)formamidopyrimidine.. It catalyses the reaction 2'-deoxyribonucleotide-(2'-deoxyribose 5'-phosphate)-2'-deoxyribonucleotide-DNA = a 3'-end 2'-deoxyribonucleotide-(2,3-dehydro-2,3-deoxyribose 5'-phosphate)-DNA + a 5'-end 5'-phospho-2'-deoxyribonucleoside-DNA + H(+). Its function is as follows. Involved in base excision repair of DNA damaged by oxidation or by mutagenic agents. Acts as a DNA glycosylase that recognizes and removes damaged bases. Has a preference for oxidized purines, such as 7,8-dihydro-8-oxoguanine (8-oxoG). Has AP (apurinic/apyrimidinic) lyase activity and introduces nicks in the DNA strand. Cleaves the DNA backbone by beta-delta elimination to generate a single-strand break at the site of the removed base with both 3'- and 5'-phosphates. The protein is Formamidopyrimidine-DNA glycosylase of Psychrobacter arcticus (strain DSM 17307 / VKM B-2377 / 273-4).